A 638-amino-acid polypeptide reads, in one-letter code: Exocyst complex component EXO70A1 (638 aa).

A disordered region spans residues 163 to 190; that stretch reads FDGLPNSLRPSSDGDGGGKPHGGHHNDD.

The protein belongs to the EXO70 family. In terms of assembly, the exocyst complex is composed of SEC3, SEC5, SEC6, SEC8, SEC10, EXO70A1 and EXO84B. Interacts with SEC3A and EXO84B. Co-localizes with FPP3/VETH1, FPP2/VETH2 and COG2 in vesicle-like small motile compartments. May interact with COG2.

The protein resides in the cytoplasm. The protein localises to the cytosol. Its subcellular location is the cytoskeleton. It localises to the phragmoplast. It is found in the cell membrane. The protein resides in the secreted. The protein localises to the cell wall. Its function is as follows. Component of the exocyst complex involved in the docking of exocytic vesicles with fusion sites on the plasma membrane during regulated or polarized secretion. Involved in polarized cell growth and organ morphogenesis. Involved in polarized cell growth and organ morphogenesis. During cytokinesis, involved in cell plate initiation, cell plate maturation and formation of new primary cell wall. Participates in polarized pectin delivery required for the polarized development of the mucilage-producing volcano cells of the seed coat. Involved in the recycling and localization of auxin efflux carriers PIN1 and PIN2, and thus in polar auxin transport regulation. Functions in vesicle trafficking in tracheary elements to regulate patterned secondary cell wall (SCW) thickening. The chain is Exocyst complex component EXO70A1 from Arabidopsis thaliana (Mouse-ear cress).